The primary structure comprises 148 residues: NPC intracellular cholesterol transporter 2 homolog a (148 aa).

A signal peptide spans 1–16 (MLRYAVIACAALVVFA). 3 cysteine pairs are disulfide-bonded: Cys-24–Cys-140, Cys-39–Cys-46, and Cys-92–Cys-99. Asn-51 carries an N-linked (GlcNAc...) asparagine glycan.

This sequence belongs to the NPC2 family. In terms of tissue distribution, broadly expressed with a higher level of expression in many tissues, including midgut, salivary gland and ventral nerve cord.

It is found in the secreted. In terms of biological role, functions redundantly with Npc2b in regulating sterol homeostasis and ecdysteroid biosynthesis, probably by controlling the availability of sterol substrate. The protein is NPC intracellular cholesterol transporter 2 homolog a of Drosophila melanogaster (Fruit fly).